A 263-amino-acid polypeptide reads, in one-letter code: Urease accessory protein UreH (263 aa).

Belongs to the UreD family. In terms of assembly, ureH, UreF and UreG form a complex that acts as a GTP-hydrolysis-dependent molecular chaperone, activating the urease apoprotein by helping to assemble the nickel containing metallocenter of UreC. The UreE protein probably delivers the nickel.

It is found in the cytoplasm. Required for maturation of urease via the functional incorporation of the urease nickel metallocenter. This chain is Urease accessory protein UreH, found in Helicobacter acinonychis (strain Sheeba).